A 173-amino-acid polypeptide reads, in one-letter code: MESQVRQNFHQDCEAGLNRTVNLKFHSSYVYLSMASYFNRDDVALSNFAKFFRERSEEEKEHAEKLIEYQNQRGGRVFLQSVEKPERDDWANGLEALQTALKLQKSVNQALLDLHAVAADKSDPHMTDFLESPYLSESVETIKKLGDHITSLKKLWSSHPGMAEYLFNKHTLG.

The Ferritin-like diiron domain maps to glutamine 7–tryptophan 156. Residues glutamate 59 and histidine 62 each contribute to the Fe cation site.

It belongs to the ferritin family. Oligomer of 24 subunits. The functional molecule is roughly spherical and contains a central cavity into which the polymeric mineral iron core is deposited.

Stores iron in a soluble, non-toxic, readily available form. Important for iron homeostasis. Iron is taken up in the ferrous form and deposited as ferric hydroxides after oxidation. The sequence is that of Ferritin, lower subunit from Aquarana catesbeiana (American bullfrog).